We begin with the raw amino-acid sequence, 240 residues long: Dihydromonapterin reductase (240 aa).

The Proton acceptor role is filled by Tyr152.

The protein belongs to the short-chain dehydrogenases/reductases (SDR) family. FolM subfamily.

It catalyses the reaction (6S)-5,6,7,8-tetrahydrofolate + NADP(+) = 7,8-dihydrofolate + NADPH + H(+). It carries out the reaction 7,8-dihydromonapterin + NADPH + H(+) = 5,6,7,8-tetrahydromonapterin + NADP(+). Functionally, catalyzes the reduction of dihydromonapterin to tetrahydromonapterin. Also has lower activity with dihydrofolate. The polypeptide is Dihydromonapterin reductase (folM) (Escherichia coli O1:K1 / APEC).